Here is a 421-residue protein sequence, read N- to C-terminus: Protein ECERIFERUM 2 (421 aa).

M1 bears the N-acetylmethionine mark.

It belongs to the plant acyltransferase family. In terms of tissue distribution, expressed at high levels in the epidermis of stems and young siliques. Expressed in flowers.

The protein localises to the endoplasmic reticulum. Its subcellular location is the nucleus. Involved in biosynthesis of the epicuticular wax. Plays a role in very-long-chain fatty acid (VLCFA) biosynthesis and is required for C28 fatty acid elongation in stem. Despite its classification as a BAHD acyltransferase based on sequence homology, CER2 does not seem to share the catalytic mechanism of the members of the BAHD family. The chain is Protein ECERIFERUM 2 (CER2) from Arabidopsis thaliana (Mouse-ear cress).